A 277-amino-acid chain; its full sequence is Undecaprenyl-diphosphatase 1 (277 aa).

8 helical membrane-spanning segments follow: residues M1 to I21, A39 to Y58, F85 to F105, F113 to I133, M147 to L167, S191 to I211, A226 to V246, and L251 to A271.

The protein belongs to the UppP family.

The protein localises to the cell membrane. It carries out the reaction di-trans,octa-cis-undecaprenyl diphosphate + H2O = di-trans,octa-cis-undecaprenyl phosphate + phosphate + H(+). Its function is as follows. Catalyzes the dephosphorylation of undecaprenyl diphosphate (UPP). Confers resistance to bacitracin. This chain is Undecaprenyl-diphosphatase 1, found in Shouchella clausii (strain KSM-K16) (Alkalihalobacillus clausii).